Here is a 308-residue protein sequence, read N- to C-terminus: MDRLLRLGGAMPQAAPPTDAPVVDTAEQVYISSLALLKMLKHGRAGVPMEVMGLMLGEFVDDYTVQVIDVFAMPQTGTGVSVEAVDPVFQAKMLDMLKQTGRPEMVVGWYHSHPGFGCWLSGVDINTQQSFEALSERAVAVVVDPIQSVKGKVVIDAFRLINPNMLVLGQEPRQTTSNLGHLQKPSVQALIHGLNRHYYSISINYRKNELEQKMLLNLHKKSWKDGLTLSDYNEHCSINEDTVAEMLDLAKNYNKSLEDEEKMTPEQLAIKNVGKQDPKRHLEEKVDKVMQNNIVQCLGAMLDTIVFK.

In terms of domain architecture, MPN spans 29 to 164; sequence VYISSLALLK…IDAFRLINPN (136 aa). Zn(2+)-binding residues include histidine 111, histidine 113, and aspartate 124. A JAMM motif motif is present at residues 111 to 124; the sequence is HSHPGFGCWLSGVD.

The protein belongs to the peptidase M67A family. PSMD14 subfamily. In terms of assembly, component of the 19S regulatory cap of the 26S proteasome.

Metalloprotease component of the 26S proteasome that specifically cleaves 'Lys-63'-linked polyubiquitin chains. The 26S proteasome is involved in the ATP-dependent degradation of ubiquitinated proteins. The function of the 'Lys-63'-specific deubiquitination of the proteasome is unclear. This Drosophila melanogaster (Fruit fly) protein is 26S proteasome non-ATPase regulatory subunit 14 (Rpn11).